A 949-amino-acid polypeptide reads, in one-letter code: Lon protease homolog, mitochondrial (949 aa).

The N-terminal 65 residues, 1–65 (MAASTGYVRL…VLPGGVQWRG (65 aa)), are a transit peptide targeting the mitochondrion. 2 disordered regions span residues 68-94 (DSGN…TGEG) and 213-240 (EGLE…DELG). The 248-residue stretch at 112 to 359 (LPLIAITRNP…KALSLLKKEF (248 aa)) folds into the Lon N-terminal domain. A compositionally biased stretch (basic residues) spans 223–232 (KSRRKLKRGK). An ATP-binding site is contributed by 512-519 (GPPGVGKT). The Lon proteolytic domain occupies 748-938 (VTPPGVVMGL…RDIFPIAFPR (191 aa)). Active-site residues include Ser844 and Lys887.

This sequence belongs to the peptidase S16 family. Homohexamer. Organized in a ring with a central cavity. The ATP-binding and proteolytic domains (AP-domain) form a hexameric chamber, while the N-terminal domain is arranged as a trimer of dimers. DNA and RNA binding is stimulated by substrate and inhibited by ATP binding. Interacts with TWNK and mitochondrial DNA polymerase subunit POLG. In terms of tissue distribution, detected in liver &gt; heart &gt; kidney &gt; testis.

The protein resides in the mitochondrion matrix. The catalysed reaction is Hydrolysis of proteins in presence of ATP.. ATP-dependent serine protease that mediates the selective degradation of misfolded, unassembled or oxidatively damaged polypeptides as well as certain short-lived regulatory proteins in the mitochondrial matrix. Endogenous substrates include mitochondrial steroidogenic acute regulatory (StAR) protein, DELE1, helicase Twinkle (TWNK) and the large ribosomal subunit protein MRPL32/bL32m. MRPL32/bL32m is protected from degradation by LONP1 when it is bound to a nucleic acid (RNA), but TWNK is not. May also have a chaperone function in the assembly of inner membrane protein complexes. Participates in the regulation of mitochondrial gene expression and in the maintenance of the integrity of the mitochondrial genome. Binds to mitochondrial promoters and RNA in a single-stranded, site-specific, and strand-specific manner. May regulate mitochondrial DNA replication and/or gene expression using site-specific, single-stranded DNA binding to target the degradation of regulatory proteins binding to adjacent sites in mitochondrial promoters. This is Lon protease homolog, mitochondrial (Lonp1) from Mus musculus (Mouse).